The primary structure comprises 635 residues: Threonine--tRNA ligase (635 aa).

Residues 1 to 61 enclose the TGS domain; that stretch reads MIKITLKDGK…HKDSSLEILT (61 aa). Residues 242–532 are catalytic; it reads DHRKLGKELD…LIEQYAGAFP (291 aa). Positions 333, 384, and 509 each coordinate Zn(2+).

The protein belongs to the class-II aminoacyl-tRNA synthetase family. In terms of assembly, homodimer. Zn(2+) serves as cofactor.

The protein localises to the cytoplasm. It catalyses the reaction tRNA(Thr) + L-threonine + ATP = L-threonyl-tRNA(Thr) + AMP + diphosphate + H(+). In terms of biological role, catalyzes the attachment of threonine to tRNA(Thr) in a two-step reaction: L-threonine is first activated by ATP to form Thr-AMP and then transferred to the acceptor end of tRNA(Thr). Also edits incorrectly charged L-seryl-tRNA(Thr). This Clostridium botulinum (strain Kyoto / Type A2) protein is Threonine--tRNA ligase.